An 860-amino-acid chain; its full sequence is Nucleolar MIF4G domain-containing protein 1 (860 aa).

3 disordered regions span residues 1 to 172 (MAAS…AARK), 191 to 211 (RCLG…PLSF), and 226 to 339 (GKNS…EKYI). A necessary for nucleolar localization and for targeting PPP1CA to the nucleolus region spans residues 1–269 (MAASRSAGEA…EEEEEGDVEK (269 aa)). The span at 20-31 (VRMKRRGGRGPR) shows a compositional bias: basic residues. At S57 the chain carries Phosphoserine. A compositionally biased stretch (basic residues) spans 77–99 (GGRKSRKELRKEKRHLRKARRLQ). Residues 115-131 (GAEEASGHRQDTEERAR) are compositionally biased toward basic and acidic residues. Residue S139 is modified to Phosphoserine. The span at 142 to 151 (RKPRPSRVKA) shows a compositional bias: basic residues. Over residues 152 to 169 (KATAATAKTRPSAAATAA) the composition is skewed to low complexity. 2 stretches are compositionally biased toward acidic residues: residues 249-267 (SDLE…EGDV) and 278-293 (AQSE…EQGE). A Required for efficient binding to PPP1CA and for targeting PPP1CA to the nucleolus motif is present at residues 307-310 (RVRF). Residues 312 to 325 (EDEEKSENSSEDGD) show a composition bias toward acidic residues. Phosphoserine is present on residues S317, S320, and S321. The MIF4G domain occupies 362–559 (KKHVKGLLNR…ETMLALKNND (198 aa)). Residues 654 to 770 (DIRRNIFCTI…SLSILKVVEF (117 aa)) form the MI domain.

This sequence belongs to the CWC22 family. May interact with EIF4A1, EIF4A2 and EIF4A3. Interacts with PPP1CA and PPP1CC. As to expression, expressed in heart and skeletal muscle.

The protein localises to the nucleus. It is found in the nucleolus. Functionally, plays a role in targeting PPP1CA to the nucleolus. The protein is Nucleolar MIF4G domain-containing protein 1 (NOM1) of Homo sapiens (Human).